Reading from the N-terminus, the 59-residue chain is Ribosome biogenesis protein Nop10 (59 aa).

Belongs to the NOP10 family.

Its function is as follows. Involved in ribosome biogenesis; more specifically in 18S rRNA pseudouridylation and in cleavage of pre-rRNA. In Thermococcus kodakarensis (strain ATCC BAA-918 / JCM 12380 / KOD1) (Pyrococcus kodakaraensis (strain KOD1)), this protein is Ribosome biogenesis protein Nop10.